The primary structure comprises 311 residues: Tricarboxylate transport protein, mitochondrial (311 aa).

Residues 1 to 13 (MAAPRAPRALTAA) constitute a propeptide, removed in mature form. Solcar repeat units lie at residues 23-111 (THPG…LSNH), 122-208 (RRGL…LRNW), and 218-303 (MNPL…VVKL). Transmembrane regions (helical) follow at residues 29–46 (ILAG…TFPT), 86–105 (GLSS…FGMF), and 129–143 (LGAG…VCPM). Phosphoserine is present on Ser-156. The next 3 helical transmembrane spans lie at 183-202 (GLTA…FFVM), 224-241 (GVFG…NTPL), and 278-297 (GTVP…FVIY).

The protein belongs to the mitochondrial carrier (TC 2.A.29) family. Possesses a short cleavable presequence, which, however, is found to be dispensable both for targeting to mitochondria and insertion into the inner membrane. However, the presequence is required to keep SLC25A1 in a soluble state and thus in an import-competent state. Mature SLC25A1 lacking the presequence is prone to aggregation.

Its subcellular location is the mitochondrion inner membrane. The catalysed reaction is (S)-malate(in) + citrate(out) = (S)-malate(out) + citrate(in). It catalyses the reaction citrate(out) + succinate(in) = citrate(in) + succinate(out). It carries out the reaction D-threo-isocitrate(in) + citrate(out) = D-threo-isocitrate(out) + citrate(in). The enzyme catalyses cis-aconitate(in) + citrate(out) = cis-aconitate(out) + citrate(in). The catalysed reaction is trans-aconitate(in) + citrate(out) = trans-aconitate(out) + citrate(in). It catalyses the reaction phosphoenolpyruvate(in) + citrate(out) = phosphoenolpyruvate(out) + citrate(in). It carries out the reaction maleate(in) + citrate(out) = maleate(out) + citrate(in). Mitochondrial electroneutral antiporter that exports citrate from the mitochondria into the cytosol in exchange for malate. Also able to mediate the exchange of citrate for isocitrate, phosphoenolpyruvate, cis-aconitate and to a lesser extent trans-aconitate, maleate and succinate. In the cytoplasm, citrate plays important roles in fatty acid and sterol synthesis, regulation of glycolysis, protein acetylation, and other physiopathological processes. The chain is Tricarboxylate transport protein, mitochondrial (Slc25a1) from Rattus norvegicus (Rat).